The primary structure comprises 352 residues: Protein RecA (352 aa).

65-72 contributes to the ATP binding site; it reads GPESSGKT. The tract at residues 333-352 is disordered; it reads VKAAANREPVEEVEEADTDI. Over residues 343–352 the composition is skewed to acidic residues; sequence EEVEEADTDI.

It belongs to the RecA family.

It localises to the cytoplasm. Its function is as follows. Can catalyze the hydrolysis of ATP in the presence of single-stranded DNA, the ATP-dependent uptake of single-stranded DNA by duplex DNA, and the ATP-dependent hybridization of homologous single-stranded DNAs. It interacts with LexA causing its activation and leading to its autocatalytic cleavage. The sequence is that of Protein RecA from Pseudomonas fluorescens.